Consider the following 456-residue polypeptide: UDP-N-acetylmuramate--L-alanine ligase (456 aa).

ATP is bound at residue 114 to 120 (GTHGKTT).

Belongs to the MurCDEF family.

Its subcellular location is the cytoplasm. It carries out the reaction UDP-N-acetyl-alpha-D-muramate + L-alanine + ATP = UDP-N-acetyl-alpha-D-muramoyl-L-alanine + ADP + phosphate + H(+). It functions in the pathway cell wall biogenesis; peptidoglycan biosynthesis. Its function is as follows. Cell wall formation. The polypeptide is UDP-N-acetylmuramate--L-alanine ligase (Porphyromonas gingivalis (strain ATCC 33277 / DSM 20709 / CIP 103683 / JCM 12257 / NCTC 11834 / 2561)).